The sequence spans 441 residues: Thymidine phosphorylase (441 aa).

It belongs to the thymidine/pyrimidine-nucleoside phosphorylase family. As to quaternary structure, homodimer.

It carries out the reaction thymidine + phosphate = 2-deoxy-alpha-D-ribose 1-phosphate + thymine. Its pathway is pyrimidine metabolism; dTMP biosynthesis via salvage pathway; dTMP from thymine: step 1/2. In terms of biological role, the enzymes which catalyze the reversible phosphorolysis of pyrimidine nucleosides are involved in the degradation of these compounds and in their utilization as carbon and energy sources, or in the rescue of pyrimidine bases for nucleotide synthesis. The polypeptide is Thymidine phosphorylase (Chromobacterium violaceum (strain ATCC 12472 / DSM 30191 / JCM 1249 / CCUG 213 / NBRC 12614 / NCIMB 9131 / NCTC 9757 / MK)).